The chain runs to 919 residues: Kinesin-like protein KIN-6 (919 aa).

The tract at residues 1 to 59 (MVRLSTKPPNPKVEMNLKEPPITGAGAGAAASPPAPSTLRRNPPRSARPPPTPLPNSKP) is disordered. Over residues 28–45 (GAAASPPAPSTLRRNPPR) the composition is skewed to low complexity. Over residues 46–56 (SARPPPTPLPN) the composition is skewed to pro residues. The 344-residue stretch at 72–415 (RLKVFLRIRP…LRQASPYMKI (344 aa)) folds into the Kinesin motor domain. 171 to 178 (GPTGSGKT) lines the ATP pocket. 5 disordered regions span residues 591–615 (EEVSEESTGHGPERSSDYDDKTGTG), 674–700 (SESCSDGGGVTHSSSSLDHPSDQSFTD), 711–730 (SPQFIGASKKSPIEQSEEER), 737–764 (TTEGIQQNVHTRGVKHHSTPSCSQEVNS), and 886–919 (KEEKVKSSRDAMGRSDKLIRLLTDHPPRARGRAQ). Residues 597-612 (STGHGPERSSDYDDKT) are compositionally biased toward basic and acidic residues. Residues 685–697 (HSSSSLDHPSDQS) are compositionally biased toward low complexity. Polar residues predominate over residues 755–764 (TPSCSQEVNS). A compositionally biased stretch (basic and acidic residues) spans 886–912 (KEEKVKSSRDAMGRSDKLIRLLTDHPP).

This sequence belongs to the TRAFAC class myosin-kinesin ATPase superfamily. Kinesin family. KIN-6 subfamily.

This Oryza sativa subsp. japonica (Rice) protein is Kinesin-like protein KIN-6.